The sequence spans 145 residues: D-aminoacyl-tRNA deacylase (145 aa).

The Gly-cisPro motif, important for rejection of L-amino acids signature appears at 137–138; sequence GP.

The protein belongs to the DTD family. In terms of assembly, homodimer.

Its subcellular location is the cytoplasm. The enzyme catalyses glycyl-tRNA(Ala) + H2O = tRNA(Ala) + glycine + H(+). It catalyses the reaction a D-aminoacyl-tRNA + H2O = a tRNA + a D-alpha-amino acid + H(+). Functionally, an aminoacyl-tRNA editing enzyme that deacylates mischarged D-aminoacyl-tRNAs. Also deacylates mischarged glycyl-tRNA(Ala), protecting cells against glycine mischarging by AlaRS. Acts via tRNA-based rather than protein-based catalysis; rejects L-amino acids rather than detecting D-amino acids in the active site. By recycling D-aminoacyl-tRNA to D-amino acids and free tRNA molecules, this enzyme counteracts the toxicity associated with the formation of D-aminoacyl-tRNA entities in vivo and helps enforce protein L-homochirality. This Enterobacter sp. (strain 638) protein is D-aminoacyl-tRNA deacylase.